A 160-amino-acid chain; its full sequence is Putative 4-hydroxy-4-methyl-2-oxoglutarate aldolase (160 aa).

Substrate-binding positions include 75–78 and arginine 97; that span reads GDQL. Aspartate 98 is a binding site for a divalent metal cation.

This sequence belongs to the class II aldolase/RraA-like family. Homotrimer. It depends on a divalent metal cation as a cofactor.

It carries out the reaction 4-hydroxy-4-methyl-2-oxoglutarate = 2 pyruvate. It catalyses the reaction oxaloacetate + H(+) = pyruvate + CO2. Functionally, catalyzes the aldol cleavage of 4-hydroxy-4-methyl-2-oxoglutarate (HMG) into 2 molecules of pyruvate. Also contains a secondary oxaloacetate (OAA) decarboxylase activity due to the common pyruvate enolate transition state formed following C-C bond cleavage in the retro-aldol and decarboxylation reactions. The polypeptide is Putative 4-hydroxy-4-methyl-2-oxoglutarate aldolase (Vibrio vulnificus (strain YJ016)).